The primary structure comprises 31 residues: Cytochrome b6-f complex subunit 6 (31 aa).

The helical transmembrane segment at 3-23 threads the bilayer; that stretch reads VFLGYIIFLAAFFGLATGLFL.

The protein belongs to the PetL family. In terms of assembly, the 4 large subunits of the cytochrome b6-f complex are cytochrome b6, subunit IV (17 kDa polypeptide, PetD), cytochrome f and the Rieske protein, while the 4 small subunits are PetG, PetL, PetM and PetN. The complex functions as a dimer.

Its subcellular location is the plastid. It is found in the chloroplast thylakoid membrane. Its function is as follows. Component of the cytochrome b6-f complex, which mediates electron transfer between photosystem II (PSII) and photosystem I (PSI), cyclic electron flow around PSI, and state transitions. PetL is important for photoautotrophic growth as well as for electron transfer efficiency and stability of the cytochrome b6-f complex. This is Cytochrome b6-f complex subunit 6 from Pyropia yezoensis (Susabi-nori).